A 63-amino-acid polypeptide reads, in one-letter code: Large ribosomal subunit protein uL29 (63 aa).

Belongs to the universal ribosomal protein uL29 family.

The protein is Large ribosomal subunit protein uL29 of Shigella dysenteriae serotype 1 (strain Sd197).